A 401-amino-acid polypeptide reads, in one-letter code: Argininosuccinate synthase (401 aa).

ATP-binding positions include 10–18 (AYSGGVDTS) and Ala38. Tyr89 is an L-citrulline binding site. Gly119 contributes to the ATP binding site. Thr121, Asn125, and Asp126 together coordinate L-aspartate. An L-citrulline-binding site is contributed by Asn125. Residues Arg129, Ser177, Ser186, Glu262, and Tyr274 each coordinate L-citrulline.

It belongs to the argininosuccinate synthase family. Type 1 subfamily. In terms of assembly, homotetramer.

It is found in the cytoplasm. The enzyme catalyses L-citrulline + L-aspartate + ATP = 2-(N(omega)-L-arginino)succinate + AMP + diphosphate + H(+). Its pathway is amino-acid biosynthesis; L-arginine biosynthesis; L-arginine from L-ornithine and carbamoyl phosphate: step 2/3. In Synechococcus sp. (strain CC9311), this protein is Argininosuccinate synthase.